The chain runs to 226 residues: Exosome complex component rrp46 (226 aa).

The interval 205-226 (NESDGHENEKNPKEDVEMDVVA) is disordered. A compositionally biased stretch (basic and acidic residues) spans 207 to 219 (SDGHENEKNPKED).

This sequence belongs to the RNase PH family. In terms of assembly, component of the RNA exosome complex. Specifically part of the catalytically inactive RNA exosome core complex (Exo-9) which may associate with the catalytic subunits rrp6 and dis3 in cytoplasmic- and nuclear-specific RNA exosome complex forms. Exo-9 is formed by a hexameric base ring of RNase PH domain-containing subunits and a cap ring consisting of csl4, rrp4 and rrp40.

The protein resides in the cytoplasm. It localises to the nucleus. It is found in the nucleolus. Functionally, non-catalytic component of the RNA exosome complex which has 3'-&gt;5' exoribonuclease activity and participates in a multitude of cellular RNA processing and degradation events. In the nucleus, the RNA exosome complex is involved in proper maturation of stable RNA species such as rRNA, snRNA and snoRNA, in the elimination of RNA processing by-products and non-coding 'pervasive' transcripts, such as antisense RNA species and cryptic unstable transcripts (CUTs), and of mRNAs with processing defects, thereby limiting or excluding their export to the cytoplasm. In the cytoplasm, the RNA exosome complex is involved in general mRNA turnover and in RNA surveillance pathways, preventing translation of aberrant mRNAs. The catalytic inactive RNA exosome core complex of 9 subunits (Exo-9) is proposed to play a pivotal role in the binding and presentation of RNA for ribonucleolysis, and to serve as a scaffold for the association with catalytic subunits and accessory proteins or complexes. ski6 is part of the hexameric ring of RNase PH domain-containing subunits proposed to form a central channel which threads RNA substrates for degradation. This chain is Exosome complex component rrp46 (rrp46), found in Schizosaccharomyces pombe (strain 972 / ATCC 24843) (Fission yeast).